Consider the following 397-residue polypeptide: Serpin B10 (397 aa).

The Nuclear localization signal signature appears at 74-77 (KKRK).

Belongs to the serpin family. Ov-serpin subfamily.

The protein localises to the nucleus. It is found in the cytoplasm. Protease inhibitor that may play a role in the regulation of protease activities during hematopoiesis and apoptosis induced by TNF. May regulate protease activities in the cytoplasm and in the nucleus. This is Serpin B10 (SERPINB10) from Bos taurus (Bovine).